The primary structure comprises 421 residues: MDYGKTLTQSLLSNGADKRENKMAFNPSVFKQHFPYLQQADAVVYLDSAATALKPQVLTDATIAFYQSAGSVHRSQYDEKQTALFEQARENVKNFIGAESEETIIWTSGTTHAINCVARGLSHQLHPKAEIIISEADHHANFVTWSEIARQYGATLHILPINEQWLIEEQDLIAVLNTNTVLVALNMVSNVTGTEQPVANLIKLIRQHSHALVLVDAAQAISHLPIDLQRLDADFIAFSAHKLYGPNGLGVLSGKRHALEQLHPLLYGGKMVERVSAQHIRFAELPYRLEAGTPNIAGVIGFNAVLEWLSQWDLTAAEQHAIALAEQCKMRLKNYPHCQLFLSPQPSSIVCFVFNGIATSDIATLLAEQNIALRAGEHCAQPYLARLGQHSTLRLSFAPYNQQADVDAFFSALDNALALLD.

Lysine 242 bears the N6-(pyridoxal phosphate)lysine mark.

It belongs to the class-V pyridoxal-phosphate-dependent aminotransferase family. Csd subfamily. Pyridoxal 5'-phosphate is required as a cofactor.

It catalyses the reaction (sulfur carrier)-H + L-cysteine = (sulfur carrier)-SH + L-alanine. Functionally, catalyzes the removal of elemental sulfur and selenium atoms from L-cysteine, L-cystine, L-selenocysteine, and L-selenocystine to produce L-alanine. This is Probable cysteine desulfurase (csd) from Pasteurella multocida (strain Pm70).